The primary structure comprises 397 residues: Chalcone synthase 2 (397 aa).

C168 is an active-site residue.

Belongs to the thiolase-like superfamily. Chalcone/stilbene synthases family.

It carries out the reaction (E)-4-coumaroyl-CoA + 3 malonyl-CoA + 3 H(+) = 2',4,4',6'-tetrahydroxychalcone + 3 CO2 + 4 CoA. The protein operates within secondary metabolite biosynthesis; flavonoid biosynthesis. Functionally, the primary product of this enzyme is 4,2',4',6'-tetrahydroxychalcone (also termed naringenin-chalcone or chalcone) which can under specific conditions spontaneously isomerize into naringenin. This Daucus carota (Wild carrot) protein is Chalcone synthase 2 (CHS2).